A 513-amino-acid chain; its full sequence is MAEVGEIIEGCRLPVLRRNQDNEDEWPLAEILSVKDISGRKLFYVHYIDFNKRLDEWVTHERLDLKKIQFPKKEAKTPTKNGLPGSRPGSPEREVPASAQASGKTLPIPVQITLRFNLPKEREAIPGGEPDQPLSSSSCLQPNHRSTKRKVEVVSPATPVPSETAPASVFPQNGSARRAVAAQPGRKRKSNCLGTDEDSQDSSDGIPSAPRMTGSLVSDRSHDDIVTRMKNIECIELGRHRLKPWYFSPYPQELTTLPVLYLCEFCLKYGRSLKCLQRHLTKCDLRHPPGNEIYRKGTISFFEIDGRKNKSYSQNLCLLAKCFLDHKTLYYDTDPFLFYVMTEYDCKGFHIVGYFSKEKESTEDYNVACILTLPPYQRRGYGKLLIEFSYELSKVEGKTGTPEKPLSDLGLLSYRSYWSQTILEILMGLKSESGERPQITINEISEITSIKKEDVISTLQYLNLINYYKGQYILTLSEDIVDGHERAMLKRLLRIDSKCLHFTPKDWSKRGKW.

Positions 8–65 (IEGCRLPVLRRNQDNEDEWPLAEILSVKDISGRKLFYVHYIDFNKRLDEWVTHERLDL) constitute a Tudor-knot domain. The residue at position 52 (Lys52) is an N6-acetyllysine. A disordered region spans residues 69–106 (QFPKKEAKTPTKNGLPGSRPGSPEREVPASAQASGKTL). Ser86 is subject to Phosphoserine. Position 90 is a phosphoserine; by CDK1 and CDK9 (Ser90). Residues Lys104 and Lys120 each carry the N6-acetyllysine; by autocatalysis modification. The tract at residues 122–217 (REAIPGGEPD…SAPRMTGSLV (96 aa)) is disordered. Positions 133–144 (PLSSSSCLQPNH) are enriched in polar residues. Residues Lys148, Lys150, Lys187, and Lys189 each carry the N6-acetyllysine; by autocatalysis modification. Ser199 bears the Phosphoserine mark. The 278-residue stretch at 227-504 (TRMKNIECIE…IDSKCLHFTP (278 aa)) folds into the MYST-type HAT domain. The C2HC MYST-type zinc finger occupies 260–285 (LYLCEFCLKYGRSLKCLQRHLTKCDL). An N6-acetyllysine; by autocatalysis modification is found at Lys327. Residues 368 to 513 (ACILTLPPYQ…PKDWSKRGKW (146 aa)) form an interaction with ATF2 region. Acetyl-CoA contacts are provided by residues 370 to 372 (ILT) and 377 to 383 (QRRGYGK). Glu403 functions as the Proton donor/acceptor in the catalytic mechanism. Acetyl-CoA-binding residues include Ser407 and Ser416. Lys430 is covalently cross-linked (Glycyl lysine isopeptide (Lys-Gly) (interchain with G-Cter in SUMO1); alternate). A Glycyl lysine isopeptide (Lys-Gly) (interchain with G-Cter in SUMO2); alternate cross-link involves residue Lys430. Lys451 participates in a covalent cross-link: Glycyl lysine isopeptide (Lys-Gly) (interchain with G-Cter in SUMO1).

Belongs to the MYST (SAS/MOZ) family. Component of the NuA4 histone acetyltransferase complex which contains the catalytic subunit KAT5/TIP60 and the subunits EP400, TRRAP/PAF400, BRD8/SMAP, EPC1, DMAP1/DNMAP1, RUVBL1/TIP49, RUVBL2, ING3, actin, ACTL6A/BAF53A, MORF4L1/MRG15, MORF4L2/MRGX, MRGBP, YEATS4/GAS41, VPS72/YL1 and MEAF6. KAT5/TIP60, EPC1, and ING3 together constitute a minimal HAT complex termed Piccolo NuA4. The NuA4 complex interacts with MYC. Interacts with ATM. Interacts with JADE1. Interacts with PLA2G4A/CPLA2, EDNRA and HDAC7. Interacts with the cytoplasmic tail of APP and APBB1/FE65. Interacts with TRIM24 and TRIM68. Forms a complex with SENP6 and UBE2I in response to UV irradiation. Identified in a complex with HINT1. Interacts with ATF2 and CUL3. Interacts with NR1D2 (via N-terminus). Component of a SWR1-like complex. Interacts with FOXP3. Interacts with ZBTB49. Interacts with SRF. Interacts with ATF3; promoting autoacetylation and deubiquitination by USP7. Interacts with EP300/p300; interaction promotes KAT5 autoacetylation. Interacts with PRKDC; interaction is impaired following KAT5 sumoylation. Interacts with GPR50. Interacts with NME3; this interaction enables recruitment of NME3 at DNA damage sites where it plays a role in the repair of DNA. Post-translationally, phosphorylated on Ser-86 and Ser-90; enhanced during G2/M phase. The phosphorylated form has a higher activity. Phosphorylation at Ser-90 by CDK1 or CDK9 is a prerequisite for phosphorylation at Ser-86 by GSK3. Phosphorylation at Ser-86 by GSK3 (GSK3A or GSK3B) activates acetyltransferase and acyltransferase activity. Phosphorylation at Ser-90 by CDK9 promotes KAT5 recruitment to chromatin. Phosphorylation by VRK1 following DNA damage promotes KAT5 association with chromatin and histone acetyltransferase activity. Autoacetylated. Autoacetylation is required for histone acetyltransferase activity. Autoacetylation at Lys-327 is facilitated by interaction with EP300/p300: it prevents ubiquitination and subsequent degradation by the proteasome and promotes acetylation of target proteins. Deacetylated by HDAC3 and SIRT1. Deacetylation by HDAC3 promotes its ubiquitination and cytoplasmic localization. In terms of processing, sumoylated by UBE2I at Lys-430 and Lys-451, leading to increase of its histone acetyltransferase activity in UV-induced DNA damage response, as well as its translocation to nuclear bodies. Sumoylation with SUMO2 by PIAS4 at Lys-430 promotes repair of DNA double-strand breaks (DSBs) via homologous recombination (HR). Sumoylation by PIAS4 impairs interaction with PRKDC, inhibiting non-homologous end joining (NHEJ)-mediated repair of DSBs, thereby facilitating HR. Desumoylated by SENP3. Post-translationally, ubiquitinated by MDM2, leading to its proteasome-dependent degradation. Ubiquitination is prevented by autoacetylation at Lys-327. Ubiquitinated following deacetylation by HDAC3, leading to cytoplasmic localization. Deubiquitinated by USP7 following interaction with ATF3, promoting its stabilization. Expressed in testis, heart, brain, kidney and liver. Weakly expressed in lung.

The protein resides in the nucleus. Its subcellular location is the chromosome. The protein localises to the cytoplasm. It localises to the centromere. It is found in the kinetochore. The protein resides in the cytoskeleton. Its subcellular location is the spindle pole. The protein localises to the nucleolus. It localises to the perinuclear region. The catalysed reaction is L-lysyl-[histone] + acetyl-CoA = N(6)-acetyl-L-lysyl-[histone] + CoA + H(+). It carries out the reaction L-lysyl-[protein] + acetyl-CoA = N(6)-acetyl-L-lysyl-[protein] + CoA + H(+). The enzyme catalyses (2E)-butenoyl-CoA + L-lysyl-[protein] = N(6)-(2E)-butenoyl-L-lysyl-[protein] + CoA + H(+). It catalyses the reaction 2-hydroxyisobutanoyl-CoA + L-lysyl-[protein] = N(6)-(2-hydroxyisobutanoyl)-L-lysyl-[protein] + CoA + H(+). The catalysed reaction is (S)-lactoyl-CoA + L-lysyl-[protein] = N(6)-[(S)-lactoyl]-L-lysyl-[protein] + CoA + H(+). Its activity is regulated as follows. Acyltransferase and acetyltransferase activities are activated by phosphorylation and autoacetylation. Autoacetylation activates the histone acetyltransferase activity. Its function is as follows. Catalytic subunit of the NuA4 histone acetyltransferase complex, a multiprotein complex involved in transcriptional activation of select genes principally by acetylation of nucleosomal histones H2A and H4. Histone acetylation alters nucleosome-DNA interactions and promotes interaction of the modified histones with other proteins which positively regulate transcription. The NuA4 histone acetyltransferase complex is required for the activation of transcriptional programs associated with proto-oncogene mediated growth induction, tumor suppressor mediated growth arrest and replicative senescence, apoptosis, and DNA repair. The NuA4 complex plays a direct role in repair of DNA double-strand breaks (DSBs) by promoting homologous recombination (HR): the complex inhibits TP53BP1 binding to chromatin via MBTD1, which recognizes and binds histone H4 trimethylated at 'Lys-20' (H4K20me), and KAT5 that catalyzes acetylation of 'Lys-15' of histone H2A (H2AK15ac), thereby blocking the ubiquitination mark required for TP53BP1 localization at DNA breaks. Also involved in DSB repair by mediating acetylation of 'Lys-5' of histone H2AX (H2AXK5ac), promoting NBN/NBS1 assembly at the sites of DNA damage. The NuA4 complex plays a key role in hematopoietic stem cell maintenance and is required to maintain acetylated H2A.Z/H2AZ1 at MYC target genes. The NuA4 complex is also required for spermatid development by promoting acetylation of histones: histone hyperacetylation is required for histone replacement during the transition from round to elongating spermatids. Component of a SWR1-like complex that specifically mediates the removal of histone H2A.Z/H2AZ1 from the nucleosome. Also acetylates non-histone proteins, such as BMAL1, ATM, AURKB, CHKA, CGAS, ERCC4/XPF, LPIN1, TP53/p53, NDC80/HEC1, NR1D2, RAN, SOX4, FOXP3, SQSTM1, ULK1 and RUBCNL/Pacer. Directly acetylates and activates ATM. Promotes nucleotide excision repair (NER) by mediating acetylation of ERCC4/XPF, thereby promoting formation of the ERCC4-ERCC1 complex. Relieves NR1D2-mediated inhibition of APOC3 expression by acetylating NR1D2. Acts as a regulator of regulatory T-cells (Treg) by catalyzing FOXP3 acetylation, thereby promoting FOXP3 transcriptional repressor activity. Involved in skeletal myoblast differentiation by mediating acetylation of SOX4. Catalyzes acetylation of APBB1/FE65, increasing its transcription activator activity. Promotes transcription elongation during the activation phase of the circadian cycle by catalyzing acetylation of BMAL1, promoting elongation of circadian transcripts. Together with GSK3 (GSK3A or GSK3B), acts as a regulator of autophagy: phosphorylated at Ser-86 by GSK3 under starvation conditions, leading to activate acetyltransferase activity and promote acetylation of key autophagy regulators, such as ULK1 and RUBCNL/Pacer. Acts as a regulator of the cGAS-STING innate antiviral response by catalyzing acetylation the N-terminus of CGAS, thereby promoting CGAS DNA-binding and activation. Also regulates lipid metabolism by mediating acetylation of CHKA or LPIN1. Promotes lipolysis of lipid droplets following glucose deprivation by mediating acetylation of isoform 1 of CHKA, thereby promoting monomerization of CHKA and its conversion into a tyrosine-protein kinase. Acts as a regulator of fatty-acid-induced triacylglycerol synthesis by catalyzing acetylation of LPIN1, thereby promoting the synthesis of diacylglycerol. In addition to protein acetyltransferase, can use different acyl-CoA substrates, such as (2E)-butenoyl-CoA (crotonyl-CoA), S-lactoyl-CoA (lactyl-CoA) and 2-hydroxyisobutanoyl-CoA (2-hydroxyisobutyryl-CoA), and is able to mediate protein crotonylation, lactylation and 2-hydroxyisobutyrylation, respectively. Acts as a key regulator of chromosome segregation and kinetochore-microtubule attachment during mitosis by mediating acetylation or crotonylation of target proteins. Catalyzes acetylation of AURKB at kinetochores, increasing AURKB activity and promoting accurate chromosome segregation in mitosis. Acetylates RAN during mitosis, promoting microtubule assembly at mitotic chromosomes. Acetylates NDC80/HEC1 during mitosis, promoting robust kinetochore-microtubule attachment. Catalyzes crotonylation of MAPRE1/EB1, thereby ensuring accurate spindle positioning in mitosis. Catalyzes lactylation of NBN/NBS1 in response to DNA damage, thereby promoting DNA double-strand breaks (DSBs) via homologous recombination (HR). In Mus musculus (Mouse), this protein is Histone acetyltransferase KAT5.